We begin with the raw amino-acid sequence, 775 residues long: Subtilisin-like protease SBT1.2 (775 aa).

The first 20 residues, 1-20, serve as a signal peptide directing secretion; the sequence is MEPKPFFLCIIFLLFCSSSS. The region spanning 27–111 is the Inhibitor I9 domain; sequence TYIVQLHPNS…AVRPDHVLQV (85 aa). The region spanning 116–618 is the Peptidase S8 domain; that stretch reads SYKFLGLDGF…AGHVNPQKAI (503 aa). Catalysis depends on charge relay system residues Asp-146 and His-222. One can recognise a PA domain in the interval 388–470; that stretch reads GGDKGSEFCL…YTESVLLKAY (83 aa). N-linked (GlcNAc...) asparagine glycosylation is found at Asn-472 and Asn-544. Ser-552 acts as the Charge relay system in catalysis. A glycan (N-linked (GlcNAc...) asparagine) is linked at Asn-652.

The protein belongs to the peptidase S8 family. As to expression, mostly expressed in leaves and cotyledons (especially in epidermal cells), and, to a lower extent, in floral buds, stems, and siliques. Strongly expressed in stomatal precursor cells (meristemoids and guard mother cells).

Its subcellular location is the secreted. It localises to the extracellular space. The protein localises to the apoplast. It is found in the cell membrane. Its function is as follows. Serine protease involved in the negative regulation of stomatal density and distribution. Not active on EPFL6 (AC Q1PEY6). Positive regulator of water use efficiency (WUE). The sequence is that of Subtilisin-like protease SBT1.2 from Arabidopsis thaliana (Mouse-ear cress).